Here is a 275-residue protein sequence, read N- to C-terminus: Uroplakin-3b (275 aa).

An N-terminal signal peptide occupies residues 1–26 (MVRTRWQPPLRALLLLVLVWLPQSLS). At 27-196 (LDLIAYVPQI…DTWPGRRSGC (170 aa)) the chain is on the lumenal side. The N-linked (GlcNAc...) asparagine glycan is linked to Asn-77. The chain crosses the membrane as a helical span at residues 197–217 (MIVITSILSALAGLLLLAFLA). Over 218–275 (ASTTRFSSLWWPEEAPEQLRIGSFMGKRYMTHHIPPSEAATLPVGCEPGLDPLPSLSP) the chain is Cytoplasmic.

The protein belongs to the uroplakin-3 family. In terms of assembly, heterodimer with uroplakin-1B (UPK1B). As to expression, expression is urothelium-specific.

Its subcellular location is the cell membrane. In terms of biological role, component of the asymmetric unit membrane (AUM); a highly specialized biomembrane elaborated by terminally differentiated urothelial cells. May play an important role in AUM-cytoskeleton interaction in terminally differentiated urothelial cells. It also contributes to the formation of urothelial glycocalyx which may play an important role in preventing bacterial adherence. The sequence is that of Uroplakin-3b (Upk3b) from Mus musculus (Mouse).